The chain runs to 257 residues: V-type proton ATPase subunit D (257 aa).

The interval 215–257 (KEQEAAQKALEGPGPGEDAAHSENNPPRNLLASEEDNLPVLFN) is disordered.

This sequence belongs to the V-ATPase D subunit family. As to quaternary structure, V-ATPase is a heteromultimeric enzyme made up of two complexes: the ATP-hydrolytic V1 complex and the proton translocation V0 complex. The V1 complex consists of three catalytic AB heterodimers that form a heterohexamer, three peripheral stalks each consisting of EG heterodimers, one central rotor including subunits D and F, and the regulatory subunits C and H. The proton translocation complex V0 consists of the proton transport subunit a, a ring of proteolipid subunits c9c'', rotary subunit d, subunits e and f, and the accessory subunits vah-19/Ac45 and vah-20/PRR.

In terms of biological role, subunit of the V1 complex of vacuolar(H+)-ATPase (V-ATPase), a multisubunit enzyme composed of a peripheral complex (V1) that hydrolyzes ATP and a membrane integral complex (V0) that translocates protons. V-ATPase is responsible for acidifying and maintaining the pH of intracellular compartments and in some cell types, is targeted to the plasma membrane, where it is responsible for acidifying the extracellular environment. This Caenorhabditis elegans protein is V-type proton ATPase subunit D.